The sequence spans 287 residues: Elongation factor Ts (287 aa).

The involved in Mg(2+) ion dislocation from EF-Tu stretch occupies residues 80–83; sequence TDFL.

This sequence belongs to the EF-Ts family.

The protein localises to the cytoplasm. Its function is as follows. Associates with the EF-Tu.GDP complex and induces the exchange of GDP to GTP. It remains bound to the aminoacyl-tRNA.EF-Tu.GTP complex up to the GTP hydrolysis stage on the ribosome. In Pseudomonas fluorescens (strain SBW25), this protein is Elongation factor Ts.